The chain runs to 320 residues: Transcription factor NAI1 (320 aa).

A disordered region spans residues 53 to 105 (TKQMKTNNNMNSTSSSPSSSSSSGSRTSQVISFGSPDTKTNPVETSLNFSNQV). Residues 58–80 (TNNNMNSTSSSPSSSSSSGSRTS) are compositionally biased toward low complexity. The span at 81-105 (QVISFGSPDTKTNPVETSLNFSNQV) shows a compositional bias: polar residues. A bHLH domain is found at 128 to 177 (HLLKEHVLAERKRRQKLNERLIALSALLPGLKKTDKATVLEDAIKHLKQL).

In terms of assembly, homodimer. Expressed constitutively in roots, leaves, stems, and flowers.

Its subcellular location is the nucleus. Functionally, transcription activator that regulates the expression of at least NAI2, PYK10 and PBP1. Required for and mediates the formation of endoplasmic reticulum bodies (ER bodies). Involved in the symbiotic interactions with the endophytes of the Sebacinaceae fungus family, such as Piriformospora indica and Sebacina. The chain is Transcription factor NAI1 (NAI1) from Arabidopsis thaliana (Mouse-ear cress).